The following is a 54-amino-acid chain: Relaxin (54 aa).

Position 1 is a pyrrolidone carboxylic acid (Q1). Intrachain disulfides connect C10-C41, C22-C54, and C40-C45.

The protein belongs to the insulin family. As to quaternary structure, heterodimer of a B chain and an A chain linked by two disulfide bonds.

The protein localises to the secreted. In terms of biological role, relaxin is an ovarian hormone that acts with estrogen to produce dilatation of the birth canal in many mammals. The protein is Relaxin of Balaenoptera acutorostrata (Common minke whale).